We begin with the raw amino-acid sequence, 898 residues long: Coiled-coil domain-containing protein 186 (898 aa).

3 disordered regions span residues 1 to 43 (MSET…NESK), 68 to 95 (NYIP…QIAN), and 702 to 749 (RRKL…SSVA). Position 2 is an N-acetylserine (serine 2). Over residues 82-95 (KTDTGSENSEQIAN) the composition is skewed to polar residues. Positions 201-712 (KYLQQEHIIK…RKLDQVESGS (512 aa)) form a coiled coil. Positions 703 to 717 (RKLDQVESGSYDKEV) are enriched in basic and acidic residues. The segment covering 718-734 (SSMGSRSSSSGSLNARS) has biased composition (low complexity). Serine 740 is subject to Phosphoserine. 2 coiled-coil regions span residues 759–803 (AMLI…IQSY) and 855–894 (KLQA…LEQR).

This Homo sapiens (Human) protein is Coiled-coil domain-containing protein 186 (CCDC186).